Here is a 177-residue protein sequence, read N- to C-terminus: MSRVGKRPVAIASGVTANVEGQTVKVKGPKGTRSFTVHDDVSVELKDNVIRVAPRFETKRAQSLYGTARAQIANLVEGVTKGFEKKLEITGVGYRAALQGKNLQLSLGYSHDVVYPVPEGITITVPKPTEITVAGIDSQRVGQVAAEIRGYRPPEPYKGKGVKYANEFIFRKEGKKK.

Belongs to the universal ribosomal protein uL6 family. In terms of assembly, part of the 50S ribosomal subunit.

Functionally, this protein binds to the 23S rRNA, and is important in its secondary structure. It is located near the subunit interface in the base of the L7/L12 stalk, and near the tRNA binding site of the peptidyltransferase center. The chain is Large ribosomal subunit protein uL6 from Afipia carboxidovorans (strain ATCC 49405 / DSM 1227 / KCTC 32145 / OM5) (Oligotropha carboxidovorans).